A 377-amino-acid chain; its full sequence is Glutamate 5-kinase (377 aa).

Lysine 18 is an ATP binding site. Positions 59, 146, and 158 each coordinate substrate. ATP contacts are provided by residues 178–179 (SD) and 222–228 (TGGMATK). The region spanning 286 to 363 (QGWVTVDAGA…DAIEAELGFT (78 aa)) is the PUA domain.

This sequence belongs to the glutamate 5-kinase family.

It localises to the cytoplasm. It catalyses the reaction L-glutamate + ATP = L-glutamyl 5-phosphate + ADP. It participates in amino-acid biosynthesis; L-proline biosynthesis; L-glutamate 5-semialdehyde from L-glutamate: step 1/2. Its function is as follows. Catalyzes the transfer of a phosphate group to glutamate to form L-glutamate 5-phosphate. This is Glutamate 5-kinase from Caulobacter vibrioides (strain ATCC 19089 / CIP 103742 / CB 15) (Caulobacter crescentus).